Consider the following 291-residue polypeptide: Ribosomal RNA small subunit methyltransferase A (291 aa).

Residues asparagine 29, leucine 31, glycine 56, glutamate 77, aspartate 102, and asparagine 127 each coordinate S-adenosyl-L-methionine.

It belongs to the class I-like SAM-binding methyltransferase superfamily. rRNA adenine N(6)-methyltransferase family. RsmA subfamily.

The protein localises to the cytoplasm. The enzyme catalyses adenosine(1518)/adenosine(1519) in 16S rRNA + 4 S-adenosyl-L-methionine = N(6)-dimethyladenosine(1518)/N(6)-dimethyladenosine(1519) in 16S rRNA + 4 S-adenosyl-L-homocysteine + 4 H(+). In terms of biological role, specifically dimethylates two adjacent adenosines (A1518 and A1519) in the loop of a conserved hairpin near the 3'-end of 16S rRNA in the 30S particle. May play a critical role in biogenesis of 30S subunits. This chain is Ribosomal RNA small subunit methyltransferase A, found in Geobacillus sp. (strain WCH70).